Here is a 377-residue protein sequence, read N- to C-terminus: Chaperone protein DnaJ 1 (377 aa).

Residues 4–68 (DYYQTLGVTR…EIRQRYDQFG (65 aa)) form the J domain. The segment at 136-218 (GGEKEIRIPH…CNGVGRKQET (83 aa)) adopts a CR-type zinc-finger fold. C149, C152, C166, C169, C192, C195, C206, and C209 together coordinate Zn(2+). CXXCXGXG motif repeat units follow at residues 149 to 156 (CQVCEGTG), 166 to 173 (CGTCNGAG), 192 to 199 (CPTCNGSG), and 206 to 213 (CEACNGVG).

The protein belongs to the DnaJ family. Homodimer. Zn(2+) is required as a cofactor.

It is found in the cytoplasm. In terms of biological role, participates actively in the response to hyperosmotic and heat shock by preventing the aggregation of stress-denatured proteins and by disaggregating proteins, also in an autonomous, DnaK-independent fashion. Unfolded proteins bind initially to DnaJ; upon interaction with the DnaJ-bound protein, DnaK hydrolyzes its bound ATP, resulting in the formation of a stable complex. GrpE releases ADP from DnaK; ATP binding to DnaK triggers the release of the substrate protein, thus completing the reaction cycle. Several rounds of ATP-dependent interactions between DnaJ, DnaK and GrpE are required for fully efficient folding. Also involved, together with DnaK and GrpE, in the DNA replication of plasmids through activation of initiation proteins. This is Chaperone protein DnaJ 1 from Synechocystis sp. (strain ATCC 27184 / PCC 6803 / Kazusa).